The sequence spans 20 residues: Brevinin-1ITb (20 aa).

Residue methionine 8 is modified to Methionine sulfoxide; partial. Residues cysteine 14 and cysteine 20 are joined by a disulfide bond.

Belongs to the frog skin active peptide (FSAP) family. Brevinin subfamily. Expressed by the skin glands.

The protein resides in the secreted. Antimicrobial peptide. This is Brevinin-1ITb from Rana italica (Italian stream frog).